Here is a 513-residue protein sequence, read N- to C-terminus: Zinc finger CCCH-type with G patch domain-containing protein (513 aa).

Position 1 is an N-acetylmethionine (M1). Residues 92–131 (PVAPGAELETVPSRETGPGPTEPGQEEDDGEDEEGGAALS) are disordered. Acidic residues predominate over residues 115–126 (GQEEDDGEDEEG). The C3H1-type zinc-finger motif lies at 176–202 (KSLKPCPFFLEGKCRFQENCRFSHGQV). The segment at 267–298 (LPPLRTDPAGSSDSDGSDADDPSYARVVEPGA) is disordered. S278 and S355 each carry phosphoserine. Positions 315-361 (TRGIGSRLLAKMGYEFGKGLGRRADGRVEPVHAVVLPRGKSLDQCAE) constitute a G-patch domain. 2 disordered regions span residues 367-394 (TRAG…PPPR) and 493-513 (QEAG…MTEF). A compositionally biased stretch (basic and acidic residues) spans 497 to 513 (LQREQRKADTHKKMTEF).

As to quaternary structure, interacts with CHD4/Mi-2; the interaction is direct.

The protein resides in the nucleus. Its function is as follows. Transcription repressor that specifically binds the 5'-GGAG[GA]A[GA]A-3' consensus sequence. Represses transcription by recruiting the chromatin multiprotein complex NuRD to target promoters. Negatively regulates expression of EGFR, a gene involved in cell proliferation, survival and migration. Its ability to repress genes of the EGFR pathway suggest it may act as a tumor suppressor. The sequence is that of Zinc finger CCCH-type with G patch domain-containing protein (ZGPAT) from Ovis aries (Sheep).